A 110-amino-acid chain; its full sequence is T cell receptor alpha variable 39 (110 aa).

Residues 1–18 (MKKLLAMILWLQLDRLSG) form the signal peptide. The Ig-like domain occupies 19 to 110 (ELKVEQNPLF…LSATYFCAVD (92 aa)). N-linked (GlcNAc...) asparagine glycosylation is found at N36 and N42. Cysteines 41 and 107 form a disulfide.

In terms of assembly, alpha-beta TR is a heterodimer composed of an alpha and beta chain; disulfide-linked. The alpha-beta TR is associated with the transmembrane signaling CD3 coreceptor proteins to form the TR-CD3 (TcR or TCR). The assembly of alpha-beta TR heterodimers with CD3 occurs in the endoplasmic reticulum where a single alpha-beta TR heterodimer associates with one CD3D-CD3E heterodimer, one CD3G-CD3E heterodimer and one CD247 homodimer forming a stable octameric structure. CD3D-CD3E and CD3G-CD3E heterodimers preferentially associate with TR alpha and TR beta chains, respectively. The association of the CD247 homodimer is the last step of TcR assembly in the endoplasmic reticulum and is required for transport to the cell surface.

The protein localises to the cell membrane. In terms of biological role, v region of the variable domain of T cell receptor (TR) alpha chain that participates in the antigen recognition. Alpha-beta T cell receptors are antigen specific receptors which are essential to the immune response and are present on the cell surface of T lymphocytes. Recognize peptide-major histocompatibility (MH) (pMH) complexes that are displayed by antigen presenting cells (APC), a prerequisite for efficient T cell adaptive immunity against pathogens. Binding of alpha-beta TR to pMH complex initiates TR-CD3 clustering on the cell surface and intracellular activation of LCK that phosphorylates the ITAM motifs of CD3G, CD3D, CD3E and CD247 enabling the recruitment of ZAP70. In turn ZAP70 phosphorylates LAT, which recruits numerous signaling molecules to form the LAT signalosome. The LAT signalosome propagates signal branching to three major signaling pathways, the calcium, the mitogen-activated protein kinase (MAPK) kinase and the nuclear factor NF-kappa-B (NF-kB) pathways, leading to the mobilization of transcription factors that are critical for gene expression and essential for T cell growth and differentiation. The T cell repertoire is generated in the thymus, by V-(D)-J rearrangement. This repertoire is then shaped by intrathymic selection events to generate a peripheral T cell pool of self-MH restricted, non-autoaggressive T cells. Post-thymic interaction of alpha-beta TR with the pMH complexes shapes TR structural and functional avidity. The polypeptide is T cell receptor alpha variable 39 (Homo sapiens (Human)).